We begin with the raw amino-acid sequence, 205 residues long: Probable thymidylate kinase (205 aa).

7–14 is a binding site for ATP; it reads GIDGAGKS.

The protein belongs to the thymidylate kinase family.

It carries out the reaction dTMP + ATP = dTDP + ADP. The protein is Probable thymidylate kinase of Thermococcus kodakarensis (strain ATCC BAA-918 / JCM 12380 / KOD1) (Pyrococcus kodakaraensis (strain KOD1)).